Here is a 290-residue protein sequence, read N- to C-terminus: Elongation factor Ts (290 aa).

Residues Thr-82–Val-85 form an involved in Mg(2+) ion dislocation from EF-Tu region.

Belongs to the EF-Ts family.

It is found in the cytoplasm. Functionally, associates with the EF-Tu.GDP complex and induces the exchange of GDP to GTP. It remains bound to the aminoacyl-tRNA.EF-Tu.GTP complex up to the GTP hydrolysis stage on the ribosome. In Cellvibrio japonicus (strain Ueda107) (Pseudomonas fluorescens subsp. cellulosa), this protein is Elongation factor Ts.